The following is a 258-amino-acid chain: MLAKRIIPCLDVKDGQVVKGVQFRNHEIIGDIVPLAQRYAQEGADELVFYDITASSDGRVVDKSWVSRVAEVIDIPFCVAGGIKSVEDAGQILTFGADKISINSPALADPTLITRLADRYGVQCIVVGIDTWYDEESDSYQVYQFTGDEKRTKATTWQTEDWIKEVQLRGAGEIVLNMMNQDGVRNGYDLRQLKQMRTICHVPLIASGGAGTSEHFLEAFRDADVDGALAASVFHKQIINIGELKKYLSEQGVEIRVC.

Residues aspartate 11 and aspartate 130 contribute to the active site.

The protein belongs to the HisA/HisF family. Heterodimer of HisH and HisF.

The protein localises to the cytoplasm. The enzyme catalyses 5-[(5-phospho-1-deoxy-D-ribulos-1-ylimino)methylamino]-1-(5-phospho-beta-D-ribosyl)imidazole-4-carboxamide + L-glutamine = D-erythro-1-(imidazol-4-yl)glycerol 3-phosphate + 5-amino-1-(5-phospho-beta-D-ribosyl)imidazole-4-carboxamide + L-glutamate + H(+). The protein operates within amino-acid biosynthesis; L-histidine biosynthesis; L-histidine from 5-phospho-alpha-D-ribose 1-diphosphate: step 5/9. Functionally, IGPS catalyzes the conversion of PRFAR and glutamine to IGP, AICAR and glutamate. The HisF subunit catalyzes the cyclization activity that produces IGP and AICAR from PRFAR using the ammonia provided by the HisH subunit. This Yersinia enterocolitica serotype O:8 / biotype 1B (strain NCTC 13174 / 8081) protein is Imidazole glycerol phosphate synthase subunit HisF.